A 164-amino-acid chain; its full sequence is Phosphopantetheine adenylyltransferase (164 aa).

Ser9 contributes to the substrate binding site. ATP contacts are provided by residues 9-10 (SF) and His17. Positions 41, 73, and 87 each coordinate substrate. ATP-binding positions include 88 to 90 (GLR), Glu98, and 123 to 129 (YSYLSSS).

It belongs to the bacterial CoaD family. In terms of assembly, homohexamer. It depends on Mg(2+) as a cofactor.

Its subcellular location is the cytoplasm. It carries out the reaction (R)-4'-phosphopantetheine + ATP + H(+) = 3'-dephospho-CoA + diphosphate. The protein operates within cofactor biosynthesis; coenzyme A biosynthesis; CoA from (R)-pantothenate: step 4/5. Its function is as follows. Reversibly transfers an adenylyl group from ATP to 4'-phosphopantetheine, yielding dephospho-CoA (dPCoA) and pyrophosphate. This is Phosphopantetheine adenylyltransferase from Clostridium botulinum (strain Okra / Type B1).